The primary structure comprises 361 residues: DNA replication and repair protein RecF (361 aa).

30–37 (GPNGSGKT) contributes to the ATP binding site.

The protein belongs to the RecF family.

It localises to the cytoplasm. Its function is as follows. The RecF protein is involved in DNA metabolism; it is required for DNA replication and normal SOS inducibility. RecF binds preferentially to single-stranded, linear DNA. It also seems to bind ATP. This is DNA replication and repair protein RecF from Yersinia pestis.